The following is a 292-amino-acid chain: Pyridoxal 5'-phosphate synthase subunit PdxS (292 aa).

Aspartate 22 is a D-ribose 5-phosphate binding site. Lysine 79 acts as the Schiff-base intermediate with D-ribose 5-phosphate in catalysis. D-ribose 5-phosphate is bound at residue glycine 151. Arginine 163 lines the D-glyceraldehyde 3-phosphate pocket. D-ribose 5-phosphate-binding positions include glycine 212 and 233–234; that span reads GS.

This sequence belongs to the PdxS/SNZ family. In the presence of PdxT, forms a dodecamer of heterodimers.

It catalyses the reaction aldehydo-D-ribose 5-phosphate + D-glyceraldehyde 3-phosphate + L-glutamine = pyridoxal 5'-phosphate + L-glutamate + phosphate + 3 H2O + H(+). Its pathway is cofactor biosynthesis; pyridoxal 5'-phosphate biosynthesis. Functionally, catalyzes the formation of pyridoxal 5'-phosphate from ribose 5-phosphate (RBP), glyceraldehyde 3-phosphate (G3P) and ammonia. The ammonia is provided by the PdxT subunit. Can also use ribulose 5-phosphate and dihydroxyacetone phosphate as substrates, resulting from enzyme-catalyzed isomerization of RBP and G3P, respectively. This Thermoanaerobacter sp. (strain X514) protein is Pyridoxal 5'-phosphate synthase subunit PdxS.